The sequence spans 103 residues: Protein IQ-DOMAIN 20 (103 aa).

Residues 10–22 (VVRRKLLRRSQSR) form a calmodulin-binding region. IQ domains lie at 36–62 (EEIA…LKSL) and 63–87 (VKLQ…CMHA).

It belongs to the IQD family. Interacts with calmodulin (CaM and CML) at the plasma membrane in a calcium ion Ca(2+)- independent manner, however, Ca(2+) seems to modulate calmodulin binding. Binds to multiple calmodulin (CaM) in the presence of Ca(2+) and CaM-like proteins.

It localises to the nucleus. The protein localises to the nucleolus. The protein resides in the cell membrane. In terms of biological role, may be involved in cooperative interactions with calmodulins or calmodulin-like proteins. Recruits calmodulin proteins to microtubules, thus being a potential scaffold in cellular signaling and trafficking. May associate with nucleic acids and regulate gene expression at the transcriptional or post-transcriptional level. This chain is Protein IQ-DOMAIN 20, found in Arabidopsis thaliana (Mouse-ear cress).